We begin with the raw amino-acid sequence, 73 residues long: Translation initiation factor IF-1 (73 aa).

The S1-like domain maps to 1–73; sequence MAKKEDTIVL…TKARVVYRHR (73 aa).

It belongs to the IF-1 family. In terms of assembly, component of the 30S ribosomal translation pre-initiation complex which assembles on the 30S ribosome in the order IF-2 and IF-3, IF-1 and N-formylmethionyl-tRNA(fMet); mRNA recruitment can occur at any time during PIC assembly.

The protein localises to the cytoplasm. Its function is as follows. One of the essential components for the initiation of protein synthesis. Stabilizes the binding of IF-2 and IF-3 on the 30S subunit to which N-formylmethionyl-tRNA(fMet) subsequently binds. Helps modulate mRNA selection, yielding the 30S pre-initiation complex (PIC). Upon addition of the 50S ribosomal subunit IF-1, IF-2 and IF-3 are released leaving the mature 70S translation initiation complex. This Chlamydia muridarum (strain MoPn / Nigg) protein is Translation initiation factor IF-1.